Reading from the N-terminus, the 198-residue chain is Peptidyl-tRNA hydrolase (198 aa).

Y16 provides a ligand contact to tRNA. H21 functions as the Proton acceptor in the catalytic mechanism. Y67, N69, and N115 together coordinate tRNA.

This sequence belongs to the PTH family. As to quaternary structure, monomer.

The protein resides in the cytoplasm. The enzyme catalyses an N-acyl-L-alpha-aminoacyl-tRNA + H2O = an N-acyl-L-amino acid + a tRNA + H(+). In terms of biological role, hydrolyzes ribosome-free peptidyl-tRNAs (with 1 or more amino acids incorporated), which drop off the ribosome during protein synthesis, or as a result of ribosome stalling. Its function is as follows. Catalyzes the release of premature peptidyl moieties from peptidyl-tRNA molecules trapped in stalled 50S ribosomal subunits, and thus maintains levels of free tRNAs and 50S ribosomes. The polypeptide is Peptidyl-tRNA hydrolase (Gloeobacter violaceus (strain ATCC 29082 / PCC 7421)).